The primary structure comprises 193 residues: Molybdenum cofactor guanylyltransferase (193 aa).

GTP-binding positions include 8–10 (LAG), lysine 21, aspartate 67, and aspartate 98. Aspartate 98 is a Mg(2+) binding site.

The protein belongs to the MobA family. In terms of assembly, monomer. The cofactor is Mg(2+).

Its subcellular location is the cytoplasm. It carries out the reaction Mo-molybdopterin + GTP + H(+) = Mo-molybdopterin guanine dinucleotide + diphosphate. Functionally, transfers a GMP moiety from GTP to Mo-molybdopterin (Mo-MPT) cofactor (Moco or molybdenum cofactor) to form Mo-molybdopterin guanine dinucleotide (Mo-MGD) cofactor. This chain is Molybdenum cofactor guanylyltransferase, found in Cereibacter sphaeroides (strain ATCC 17029 / ATH 2.4.9) (Rhodobacter sphaeroides).